A 387-amino-acid polypeptide reads, in one-letter code: Beta-alanyl-dopamine/carcinine hydrolase (387 aa).

Belongs to the peptidase C45 family. In terms of assembly, the unprocessed protein forms homodimers. May form heterodimers composed of a 15 kDa alpha subunit and a 30 kDa beta subunit. In terms of processing, the protein is synthesized as a 43 kDa precursor which is then self-processed into a 15 kDa alpha subunit and a 30 kDa beta subunit. Processing appears to be necessary for beta-alanyl-dopamine/carcinine hydrolase activity. The beta subunit carries the beta-alanyl-dopamine/carcinine hydrolase activity. Expressed in body, head, optic lobes and retina (at protein level). Expressed in photoreceptor cells R1-R6 in the lamina and in photoreceptor cells R7 and R8 in the medulla (at protein level).

The protein localises to the cell projection. The protein resides in the axon. It localises to the cytoplasm. It catalyses the reaction carcinine + H2O = histamine + beta-alanine. The catalysed reaction is beta-alanyl-dopamine + H2O = dopamine + beta-alanine. Functionally, in the cuticle, catalyzes the hydrolysis of beta-alanyl-dopamine releasing dopamine and beta-alanine; dopamine is a metabolite involved in the pigmentation and sclerotization of the insect cuticle. In the photoreceptor cells, catalyzes the hydrolysis of carcinine releasing histamine and beta-alanine contributing to the recycling of the neurotransmitter histamine in the optical nerve system. Also, regulates the cuticular hydrocarbon composition in females. In Drosophila melanogaster (Fruit fly), this protein is Beta-alanyl-dopamine/carcinine hydrolase.